The primary structure comprises 573 residues: 2-succinyl-5-enolpyruvyl-6-hydroxy-3-cyclohexene-1-carboxylate synthase (573 aa).

This sequence belongs to the TPP enzyme family. MenD subfamily. As to quaternary structure, homodimer. The cofactor is Mg(2+). Mn(2+) is required as a cofactor. Requires thiamine diphosphate as cofactor.

The enzyme catalyses isochorismate + 2-oxoglutarate + H(+) = 5-enolpyruvoyl-6-hydroxy-2-succinyl-cyclohex-3-ene-1-carboxylate + CO2. Its pathway is quinol/quinone metabolism; 1,4-dihydroxy-2-naphthoate biosynthesis; 1,4-dihydroxy-2-naphthoate from chorismate: step 2/7. It participates in quinol/quinone metabolism; menaquinone biosynthesis. Its function is as follows. Catalyzes the thiamine diphosphate-dependent decarboxylation of 2-oxoglutarate and the subsequent addition of the resulting succinic semialdehyde-thiamine pyrophosphate anion to isochorismate to yield 2-succinyl-5-enolpyruvyl-6-hydroxy-3-cyclohexene-1-carboxylate (SEPHCHC). The sequence is that of 2-succinyl-5-enolpyruvyl-6-hydroxy-3-cyclohexene-1-carboxylate synthase from Shewanella baltica (strain OS195).